Here is a 153-residue protein sequence, read N- to C-terminus: Protein ripply2.2 (153 aa).

Residues 58–61 (WRPW) carry the WRPW motif; required for transcriptional repression and interaction with tle4 motif. The tract at residues 93–128 (HPVRLFWPKSKLLDNTYQEAADLLRNFPVQATISLY) is ripply homology domain. Residues 127–153 (LYNDSESDTDNEEDSSEEEQDSGFESE) are disordered. A compositionally biased stretch (acidic residues) spans 131 to 153 (SESDTDNEEDSSEEEQDSGFESE).

It belongs to the ripply family. In terms of assembly, interacts with tle4 and tbx6, and mediates interaction between these proteins. As to expression, expressed in the presomitic mesoderm (PSM) in the anterior halves of somitomeres S-I, S-II and S-III.

The protein resides in the nucleus. Required during somitogenesis for the formation of somite boundaries. Represses the expression of genes involved in somite segmentation by acting with the corepressor tle4 to down-regulate the transcriptional activity of tbx6. May act by regulating the activity of tle4. Represses transcription of delta2, thy1 and ripply2.2/bowline itself. The sequence is that of Protein ripply2.2 (ripply2.2) from Xenopus laevis (African clawed frog).